The following is a 363-amino-acid chain: NADH-quinone oxidoreductase subunit H (363 aa).

Transmembrane regions (helical) follow at residues 29-49 (VLKI…YVVW), 62-82 (GPMY…KLLF), 96-116 (FVIA…VVPF), 127-147 (VGLL…ILAG), 163-183 (AAQV…VMIA), 202-222 (FFDW…VSGV), 238-257 (EIVA…LFFL), 264-286 (ILVS…QGWV), 299-319 (KGGW…YIWF), and 339-359 (FIPL…YGVI).

This sequence belongs to the complex I subunit 1 family. NDH-1 is composed of 14 different subunits. Subunits NuoA, H, J, K, L, M, N constitute the membrane sector of the complex.

It is found in the cell inner membrane. The catalysed reaction is a quinone + NADH + 5 H(+)(in) = a quinol + NAD(+) + 4 H(+)(out). Its function is as follows. NDH-1 shuttles electrons from NADH, via FMN and iron-sulfur (Fe-S) centers, to quinones in the respiratory chain. The immediate electron acceptor for the enzyme in this species is believed to be ubiquinone. Couples the redox reaction to proton translocation (for every two electrons transferred, four hydrogen ions are translocated across the cytoplasmic membrane), and thus conserves the redox energy in a proton gradient. This subunit may bind ubiquinone. This Xanthomonas euvesicatoria pv. vesicatoria (strain 85-10) (Xanthomonas campestris pv. vesicatoria) protein is NADH-quinone oxidoreductase subunit H.